The chain runs to 869 residues: Bifunctional uridylyltransferase/uridylyl-removing enzyme (869 aa).

The interval 1 to 332 (MTATPADRPD…QFDGEAVPVQ (332 aa)) is uridylyltransferase. A uridylyl-removing region spans residues 333–691 (LDAGFSLRRG…RRAVPDNDAL (359 aa)). One can recognise an HD domain in the interval 450 to 572 (VDQHTLMVLR…VGTRERLDYL (123 aa)). ACT domains are found at residues 692–771 (EVFV…PSRR) and 798–869 (RISL…LDPT).

Belongs to the GlnD family. Mg(2+) serves as cofactor.

It catalyses the reaction [protein-PII]-L-tyrosine + UTP = [protein-PII]-uridylyl-L-tyrosine + diphosphate. The catalysed reaction is [protein-PII]-uridylyl-L-tyrosine + H2O = [protein-PII]-L-tyrosine + UMP + H(+). Its activity is regulated as follows. Uridylyltransferase (UTase) activity is inhibited by glutamine, while glutamine activates uridylyl-removing (UR) activity. In terms of biological role, modifies, by uridylylation and deuridylylation, the PII regulatory proteins (GlnB and homologs), in response to the nitrogen status of the cell that GlnD senses through the glutamine level. Under low glutamine levels, catalyzes the conversion of the PII proteins and UTP to PII-UMP and PPi, while under higher glutamine levels, GlnD hydrolyzes PII-UMP to PII and UMP (deuridylylation). Thus, controls uridylylation state and activity of the PII proteins, and plays an important role in the regulation of nitrogen assimilation and metabolism. In Xanthomonas campestris pv. campestris (strain 8004), this protein is Bifunctional uridylyltransferase/uridylyl-removing enzyme.